Reading from the N-terminus, the 40-residue chain is Photosystem II reaction center protein J (40 aa).

A helical membrane pass occupies residues 8-28 (IPLWLIGTLTGILVIGLIGIF).

Belongs to the PsbJ family. PSII is composed of 1 copy each of membrane proteins PsbA, PsbB, PsbC, PsbD, PsbE, PsbF, PsbH, PsbI, PsbJ, PsbK, PsbL, PsbM, PsbT, PsbX, PsbY, PsbZ, Psb30/Ycf12, at least 3 peripheral proteins of the oxygen-evolving complex and a large number of cofactors. It forms dimeric complexes.

Its subcellular location is the plastid. The protein localises to the chloroplast thylakoid membrane. One of the components of the core complex of photosystem II (PSII). PSII is a light-driven water:plastoquinone oxidoreductase that uses light energy to abstract electrons from H(2)O, generating O(2) and a proton gradient subsequently used for ATP formation. It consists of a core antenna complex that captures photons, and an electron transfer chain that converts photonic excitation into a charge separation. This Phalaenopsis aphrodite subsp. formosana (Moth orchid) protein is Photosystem II reaction center protein J.